A 118-amino-acid polypeptide reads, in one-letter code: Large ribosomal subunit protein bL20 (118 aa).

The protein belongs to the bacterial ribosomal protein bL20 family.

In terms of biological role, binds directly to 23S ribosomal RNA and is necessary for the in vitro assembly process of the 50S ribosomal subunit. It is not involved in the protein synthesizing functions of that subunit. The polypeptide is Large ribosomal subunit protein bL20 (Sodalis glossinidius (strain morsitans)).